A 407-amino-acid chain; its full sequence is Elongation factor Tu (407 aa).

Residues 10 to 217 (KPHVNVGTIG…TLDEYIPEPE (208 aa)) enclose the tr-type G domain. The segment at 19–26 (GHVDHGKT) is G1. 19–26 (GHVDHGKT) contributes to the GTP binding site. Threonine 26 contributes to the Mg(2+) binding site. Positions 60-64 (GITIA) are G2. The G3 stretch occupies residues 81–84 (DCPG). Residues 81-85 (DCPGH) and 136-139 (NKAD) contribute to the GTP site. A G4 region spans residues 136-139 (NKAD). Positions 184–186 (SAL) are G5.

Belongs to the TRAFAC class translation factor GTPase superfamily. Classic translation factor GTPase family. EF-Tu/EF-1A subfamily. In terms of assembly, monomer.

It localises to the cytoplasm. The catalysed reaction is GTP + H2O = GDP + phosphate + H(+). GTP hydrolase that promotes the GTP-dependent binding of aminoacyl-tRNA to the A-site of ribosomes during protein biosynthesis. The polypeptide is Elongation factor Tu (Teredinibacter turnerae (strain ATCC 39867 / T7901)).